The following is a 245-amino-acid chain: Peroxisome biogenesis protein 19-2 (245 aa).

Residues 17 to 106 (ALDDFKDLNL…LSSKQQPTGS (90 aa)) form a disordered region. Composition is skewed to basic and acidic residues over residues 33-44 (VKKEEGDKKETE) and 71-92 (AKEDHVTEALDKLREQTRETVK). The segment covering 96 to 105 (SLSSKQQPTG) has biased composition (polar residues). Residue Cys242 is modified to Cysteine methyl ester. Cys242 carries the S-farnesyl cysteine lipid modification. A propeptide spans 243–245 (CVM) (removed in mature form).

Belongs to the peroxin-19 family. As to quaternary structure, dimer. Interacts with PEX10 (via C-terminus). May be farnesylated. As to expression, expressed in roots, leaves, flowers, siliques and stems. Highest expression in roots and leaves.

The protein localises to the cytoplasm. It localises to the peroxisome membrane. Contributes to morphology determination of peroxisomes, but not to import of peroxisomal matrix proteins. Required for proper post-translational import and stabilization of peroxisomal membrane proteins (PMPs). Acts as a cytosolic import receptor for PMPs and delivers them to the docking factor PEX3 at the peroxisomal membrane for subsequent insertion into the membrane. Acts as a chaperone in stabilizing or maintaining PMPs in the lipid bilayer. The chain is Peroxisome biogenesis protein 19-2 (PEX19-2) from Arabidopsis thaliana (Mouse-ear cress).